The sequence spans 134 residues: Lymphocyte antigen 6G (134 aa).

The signal sequence occupies residues 1–26 (MDTCHIAKSCVLILLVVLLCAERAQG). The UPAR/Ly6 domain occupies 27 to 118 (LECYNCIGVP…PTGGSSWTMA (92 aa)). Cystine bridges form between Cys-29–Cys-53, Cys-32–Cys-41, Cys-46–Cys-74, Cys-78–Cys-98, and Cys-99–Cys-104. Asn-105 carries the GPI-anchor amidated asparagine lipid modification. Residues 106–134 (AAVPTGGSSWTMAGVLLFSLVSVLLQTFL) constitute a propeptide, removed in mature form.

As to expression, expressed in bone marrow.

It is found in the cell membrane. The chain is Lymphocyte antigen 6G (Ly6g) from Mus musculus (Mouse).